A 121-amino-acid polypeptide reads, in one-letter code: Small ribosomal subunit protein uS13 (121 aa).

Residues 89–121 form a disordered region; the sequence is MRHRRGLPVRGQNTKNNARTRKGKKVSIAGKKK. Over residues 106-121 the composition is skewed to basic residues; it reads ARTRKGKKVSIAGKKK.

The protein belongs to the universal ribosomal protein uS13 family. Part of the 30S ribosomal subunit. Forms a loose heterodimer with protein S19. Forms two bridges to the 50S subunit in the 70S ribosome.

Its function is as follows. Located at the top of the head of the 30S subunit, it contacts several helices of the 16S rRNA. In the 70S ribosome it contacts the 23S rRNA (bridge B1a) and protein L5 of the 50S subunit (bridge B1b), connecting the 2 subunits; these bridges are implicated in subunit movement. Contacts the tRNAs in the A and P-sites. This is Small ribosomal subunit protein uS13 from Latilactobacillus sakei subsp. sakei (strain 23K) (Lactobacillus sakei subsp. sakei).